The sequence spans 159 residues: NADH-quinone oxidoreductase subunit I (159 aa).

4Fe-4S ferredoxin-type domains lie at 51–80 (RRYENGEERCIACKLCEAICPAQAIVIEAD) and 90–119 (TRYDIDMTKCIYCGLCQEACPVDAIVEGPN). Cysteine 60, cysteine 63, cysteine 66, cysteine 70, cysteine 99, cysteine 102, cysteine 105, and cysteine 109 together coordinate [4Fe-4S] cluster.

This sequence belongs to the complex I 23 kDa subunit family. NDH-1 is composed of 14 different subunits. Subunits NuoA, H, J, K, L, M, N constitute the membrane sector of the complex. It depends on [4Fe-4S] cluster as a cofactor.

The protein localises to the cell inner membrane. The enzyme catalyses a quinone + NADH + 5 H(+)(in) = a quinol + NAD(+) + 4 H(+)(out). NDH-1 shuttles electrons from NADH, via FMN and iron-sulfur (Fe-S) centers, to quinones in the respiratory chain. The immediate electron acceptor for the enzyme in this species is believed to be ubiquinone. Couples the redox reaction to proton translocation (for every two electrons transferred, four hydrogen ions are translocated across the cytoplasmic membrane), and thus conserves the redox energy in a proton gradient. The protein is NADH-quinone oxidoreductase subunit I of Rickettsia bellii (strain OSU 85-389).